Reading from the N-terminus, the 144-residue chain is D-aminoacyl-tRNA deacylase (144 aa).

The Gly-cisPro motif, important for rejection of L-amino acids signature appears at glycine 136–proline 137.

Belongs to the DTD family. As to quaternary structure, homodimer.

The protein localises to the cytoplasm. It catalyses the reaction glycyl-tRNA(Ala) + H2O = tRNA(Ala) + glycine + H(+). It carries out the reaction a D-aminoacyl-tRNA + H2O = a tRNA + a D-alpha-amino acid + H(+). Its function is as follows. An aminoacyl-tRNA editing enzyme that deacylates mischarged D-aminoacyl-tRNAs. Also deacylates mischarged glycyl-tRNA(Ala), protecting cells against glycine mischarging by AlaRS. Acts via tRNA-based rather than protein-based catalysis; rejects L-amino acids rather than detecting D-amino acids in the active site. By recycling D-aminoacyl-tRNA to D-amino acids and free tRNA molecules, this enzyme counteracts the toxicity associated with the formation of D-aminoacyl-tRNA entities in vivo and helps enforce protein L-homochirality. The sequence is that of D-aminoacyl-tRNA deacylase from Vibrio parahaemolyticus serotype O3:K6 (strain RIMD 2210633).